The following is a 738-amino-acid chain: DNA repair and recombination protein RAD54-like (738 aa).

Residues Met1 to Pro31 form a disordered region. Residues Asp18–Met29 show a composition bias toward acidic residues. Residues Gly164–Gly339 form the Helicase ATP-binding domain. Residue Asp177–Thr184 participates in ATP binding. Residues Asp290–His293 carry the DEAH box motif. One can recognise a Helicase C-terminal domain in the interval Leu493–Glu647. Phosphoserine occurs at positions 566 and 567.

In terms of assembly, homohexamer. Interacts with RAD51. Phosphorylated. Phosphorylations at Ser-566 and Ser-567 allow efficient removal of RAD51 filaments from DNA.

The enzyme catalyses ATP + H2O = ADP + phosphate + H(+). Its function is as follows. Plays an essential role in homologous recombination (HR) which is a major pathway for repairing DNA double-strand breaks (DSBs), single-stranded DNA (ssDNA) gaps, and stalled or collapsed replication forks. Acts as a molecular motor during the homology search and guides RAD51 ssDNA along a donor dsDNA thereby changing the homology search from the diffusion-based mechanism to a motor-guided mechanism. Also plays an essential role in RAD51-mediated synaptic complex formation which consists of three strands encased in a protein filament formed once homology is recognized. Once DNA strand exchange occured, dissociates RAD51 from nucleoprotein filaments formed on dsDNA. The protein is DNA repair and recombination protein RAD54-like (rad54l) of Danio rerio (Zebrafish).